We begin with the raw amino-acid sequence, 358 residues long: Phospho-N-acetylmuramoyl-pentapeptide-transferase (358 aa).

Transmembrane regions (helical) follow at residues 27 to 47 (IYAM…VIRV), 73 to 93 (TMGG…WADL), 97 to 117 (YIWT…VDDY), 134 to 154 (MFWQ…KPGF), 170 to 190 (LWFW…NAVN), 197 to 217 (GLAI…SYVA), 233 to 253 (GAGE…GFLW), 261 to 281 (VFMG…IAVI), 286 to 306 (ILLV…IFQV), and 335 to 355 (KIIV…ISTL).

The protein belongs to the glycosyltransferase 4 family. MraY subfamily. Mg(2+) is required as a cofactor.

It localises to the cell inner membrane. The catalysed reaction is UDP-N-acetyl-alpha-D-muramoyl-L-alanyl-gamma-D-glutamyl-meso-2,6-diaminopimeloyl-D-alanyl-D-alanine + di-trans,octa-cis-undecaprenyl phosphate = di-trans,octa-cis-undecaprenyl diphospho-N-acetyl-alpha-D-muramoyl-L-alanyl-D-glutamyl-meso-2,6-diaminopimeloyl-D-alanyl-D-alanine + UMP. It functions in the pathway cell wall biogenesis; peptidoglycan biosynthesis. Catalyzes the initial step of the lipid cycle reactions in the biosynthesis of the cell wall peptidoglycan: transfers peptidoglycan precursor phospho-MurNAc-pentapeptide from UDP-MurNAc-pentapeptide onto the lipid carrier undecaprenyl phosphate, yielding undecaprenyl-pyrophosphoryl-MurNAc-pentapeptide, known as lipid I. The chain is Phospho-N-acetylmuramoyl-pentapeptide-transferase from Pelobacter propionicus (strain DSM 2379 / NBRC 103807 / OttBd1).